The sequence spans 342 residues: Methionine import ATP-binding protein MetN 2 (342 aa).

The region spanning 2-241 (ISIEGLSKVF…PKQLVTRKFV (240 aa)) is the ABC transporter domain. ATP is bound at residue 38–45 (GYSGAGKS).

The protein belongs to the ABC transporter superfamily. Methionine importer (TC 3.A.1.24) family. In terms of assembly, the complex is composed of two ATP-binding proteins (MetN), two transmembrane proteins (MetI) and a solute-binding protein (MetQ).

It localises to the cell membrane. The catalysed reaction is L-methionine(out) + ATP + H2O = L-methionine(in) + ADP + phosphate + H(+). It catalyses the reaction D-methionine(out) + ATP + H2O = D-methionine(in) + ADP + phosphate + H(+). Its function is as follows. Part of the ABC transporter complex MetNIQ involved in methionine import. Responsible for energy coupling to the transport system. This is Methionine import ATP-binding protein MetN 2 from Oceanobacillus iheyensis (strain DSM 14371 / CIP 107618 / JCM 11309 / KCTC 3954 / HTE831).